A 241-amino-acid polypeptide reads, in one-letter code: Phycocyanobilin:ferredoxin oxidoreductase (241 aa).

Belongs to the HY2 family.

It catalyses the reaction (2R,3Z)-phycocyanobilin + 4 oxidized [2Fe-2S]-[ferredoxin] = biliverdin IXalpha + 4 reduced [2Fe-2S]-[ferredoxin] + 4 H(+). Catalyzes the four-electron reduction of biliverdin IX-alpha (2-electron reduction at both the A and D rings); the reaction proceeds via an isolatable 2-electron intermediate, 181,182-dihydrobiliverdin. The chain is Phycocyanobilin:ferredoxin oxidoreductase from Prochlorococcus marinus (strain MIT 9301).